A 371-amino-acid polypeptide reads, in one-letter code: LIM domain-binding protein 2 (371 aa).

Disordered regions lie at residues 244-289 and 325-371; these read APPA…AAAN and QYDA…QASQ. Low complexity predominate over residues 263–289; sequence STSSTSNSSAGNNANSTNSKKKSAAAN. The LIM interaction domain (LID) domain maps to 296 to 335; the sequence is DVMVVGEPTLMGGEFGDEDERLITRLENTQYDAANGMDDE. Polar residues predominate over residues 339 to 371; that stretch reads NNSPALGNNSPWNSKPPANQETKSENPTPQASQ.

It belongs to the LDB family. First expressed at stages 15-16 in presumptive limb mesoderm. As limb outgrowth proceeds, expressed in the entire limb bud, concentrating in the distal mesoderm throughout limb development. Both hindlimbs and forelimbs exhibit similar expression patterns.

The protein resides in the nucleus. In terms of biological role, binds to the LIM domain of a wide variety of LIM domain-containing transcription factors. In Gallus gallus (Chicken), this protein is LIM domain-binding protein 2 (LDB2).